The sequence spans 364 residues: Probable dual-specificity RNA methyltransferase RlmN (364 aa).

The Proton acceptor role is filled by E107. Residues 113–346 (HDYGNSVCVT…ATIRREQGSD (234 aa)) form the Radical SAM core domain. A disulfide bond links C120 and C351. [4Fe-4S] cluster is bound by residues C127, C131, and C134. Residues 177–178 (GE), S209, 232–234 (SLH), and N308 each bind S-adenosyl-L-methionine. Catalysis depends on C351, which acts as the S-methylcysteine intermediate.

This sequence belongs to the radical SAM superfamily. RlmN family. Requires [4Fe-4S] cluster as cofactor.

Its subcellular location is the cytoplasm. The catalysed reaction is adenosine(2503) in 23S rRNA + 2 reduced [2Fe-2S]-[ferredoxin] + 2 S-adenosyl-L-methionine = 2-methyladenosine(2503) in 23S rRNA + 5'-deoxyadenosine + L-methionine + 2 oxidized [2Fe-2S]-[ferredoxin] + S-adenosyl-L-homocysteine. The enzyme catalyses adenosine(37) in tRNA + 2 reduced [2Fe-2S]-[ferredoxin] + 2 S-adenosyl-L-methionine = 2-methyladenosine(37) in tRNA + 5'-deoxyadenosine + L-methionine + 2 oxidized [2Fe-2S]-[ferredoxin] + S-adenosyl-L-homocysteine. Specifically methylates position 2 of adenine 2503 in 23S rRNA and position 2 of adenine 37 in tRNAs. Confers resistance to some classes of antibiotics. In Staphylococcus aureus (strain MW2), this protein is Probable dual-specificity RNA methyltransferase RlmN.